We begin with the raw amino-acid sequence, 222 residues long: Ribosomal RNA small subunit methyltransferase G (222 aa).

S-adenosyl-L-methionine contacts are provided by residues glycine 84, phenylalanine 89, 141–142 (VE), and arginine 154.

This sequence belongs to the methyltransferase superfamily. RNA methyltransferase RsmG family.

Its subcellular location is the cytoplasm. The enzyme catalyses guanosine(527) in 16S rRNA + S-adenosyl-L-methionine = N(7)-methylguanosine(527) in 16S rRNA + S-adenosyl-L-homocysteine. In terms of biological role, specifically methylates the N7 position of guanine in position 527 of 16S rRNA. The polypeptide is Ribosomal RNA small subunit methyltransferase G (Bradyrhizobium sp. (strain ORS 278)).